We begin with the raw amino-acid sequence, 316 residues long: Melanocyte-stimulating hormone receptor (316 aa).

Residues 1–37 (MPMQGAHRKLLGSLNSTPTATSNLGLAANHTGAPCLE) are Extracellular-facing. N-linked (GlcNAc...) asparagine glycosylation is present at asparagine 29. The chain crosses the membrane as a helical span at residues 38 to 63 (VSIPDGLFLSLGLVSLVENVLVVAAI). The Cytoplasmic segment spans residues 64–72 (AKNRNLHSS). The helical transmembrane segment at 73 to 93 (MYCFICCLALSDLLVSGSNML) threads the bilayer. Over 94 to 118 (ETAVILLLEAGALATRTSVVQQLHN) the chain is Extracellular. A helical membrane pass occupies residues 119-140 (TIDVLTCSSMLCSLCFLGAIAV). At 141–163 (DRYISIFYALRYHSIMTLPRAQR) the chain is on the cytoplasmic side. The chain crosses the membrane as a helical span at residues 164–183 (AIAAIWVASVLSSTLFITYY). Over 184–191 (DHAAVLLC) the chain is Extracellular. Residues 192-211 (LVVFFLAMLVLMAVLYVHML) form a helical membrane-spanning segment. The Cytoplasmic segment spans residues 212 to 240 (ARACQHAHGIIRLHKRQSPAHQGFGLRGA). The helical transmembrane segment at 241–266 (ATLTILLGIFFLCWGPFFLHLTLVVF) threads the bilayer. The Extracellular portion of the chain corresponds to 267-279 (CPQHLTCSCIFKN). A helical membrane pass occupies residues 280–300 (FKVFLTLIICNTIIDPLIYAF). At 301 to 316 (RSQELRRTLKEVLCSW) the chain is on the cytoplasmic side. Cysteine 314 carries S-palmitoyl cysteine lipidation.

It belongs to the G-protein coupled receptor 1 family. In terms of assembly, interacts with MGRN1, but does not undergo MGRN1-mediated ubiquitination; this interaction competes with GNAS-binding and thus inhibits agonist-induced cAMP production. Interacts with OPN3; the interaction results in a decrease in MC1R-mediated cAMP signaling and ultimately a decrease in melanin production in melanocytes.

The protein localises to the cell membrane. Functionally, receptor for MSH (alpha, beta and gamma) and ACTH. The activity of this receptor is mediated by G proteins which activate adenylate cyclase. Mediates melanogenesis, the production of eumelanin (black/brown) and phaeomelanin (red/yellow), via regulation of cAMP signaling in melanocytes. The sequence is that of Melanocyte-stimulating hormone receptor (MC1R) from Leontocebus fuscicollis (Brown-mantled tamarin).